The following is a 270-amino-acid chain: Phosphatidylglycerol--prolipoprotein diacylglyceryl transferase (270 aa).

Transmembrane regions (helical) follow at residues 19–39 (FPVY…LWLA), 54–74 (IDLV…YYVI), 92–112 (QGGL…ILFA), and 116–136 (GLSF…GQAI). Residue Arg138 participates in a 1,2-diacyl-sn-glycero-3-phospho-(1'-sn-glycerol) binding. Helical transmembrane passes span 178 to 198 (HPTF…LLAL), 206 to 226 (GELF…VEGL), and 236 to 256 (LRIA…FIIV).

Belongs to the Lgt family.

It is found in the cell membrane. The enzyme catalyses L-cysteinyl-[prolipoprotein] + a 1,2-diacyl-sn-glycero-3-phospho-(1'-sn-glycerol) = an S-1,2-diacyl-sn-glyceryl-L-cysteinyl-[prolipoprotein] + sn-glycerol 1-phosphate + H(+). It functions in the pathway protein modification; lipoprotein biosynthesis (diacylglyceryl transfer). In terms of biological role, catalyzes the transfer of the diacylglyceryl group from phosphatidylglycerol to the sulfhydryl group of the N-terminal cysteine of a prolipoprotein, the first step in the formation of mature lipoproteins. The protein is Phosphatidylglycerol--prolipoprotein diacylglyceryl transferase of Bacillus mycoides (strain KBAB4) (Bacillus weihenstephanensis).